We begin with the raw amino-acid sequence, 305 residues long: Oxygen-dependent coproporphyrinogen-III oxidase (305 aa).

Serine 97 serves as a coordination point for substrate. The a divalent metal cation site is built by histidine 101 and histidine 111. Catalysis depends on histidine 111, which acts as the Proton donor. 113 to 115 (NVR) is a substrate binding site. Residues histidine 150 and histidine 180 each coordinate a divalent metal cation. The interval 245–280 (YVEFNLVWDRGTHFGLQSGGRTESILLSMPPLASWA) is important for dimerization. A substrate-binding site is contributed by 263 to 265 (GGR).

Belongs to the aerobic coproporphyrinogen-III oxidase family. Homodimer. The cofactor is a divalent metal cation.

It localises to the cytoplasm. The enzyme catalyses coproporphyrinogen III + O2 + 2 H(+) = protoporphyrinogen IX + 2 CO2 + 2 H2O. It participates in porphyrin-containing compound metabolism; protoporphyrin-IX biosynthesis; protoporphyrinogen-IX from coproporphyrinogen-III (O2 route): step 1/1. Involved in the heme biosynthesis. Catalyzes the aerobic oxidative decarboxylation of propionate groups of rings A and B of coproporphyrinogen-III to yield the vinyl groups in protoporphyrinogen-IX. This chain is Oxygen-dependent coproporphyrinogen-III oxidase, found in Variovorax paradoxus (strain S110).